Here is a 595-residue protein sequence, read N- to C-terminus: D-xylonate dehydratase (595 aa).

Position 64 (C64) interacts with [2Fe-2S] cluster. Residue E96 participates in Mg(2+) binding. C132 provides a ligand contact to [2Fe-2S] cluster. D133 lines the Mg(2+) pocket. C205 contributes to the [2Fe-2S] cluster binding site. E467 is a Mg(2+) binding site.

It belongs to the IlvD/Edd family. As to quaternary structure, homotetramer. [2Fe-2S] cluster is required as a cofactor. Mg(2+) serves as cofactor.

The catalysed reaction is D-xylonate = 2-dehydro-3-deoxy-D-arabinonate + H2O. It catalyses the reaction D-gluconate = 2-dehydro-3-deoxy-D-gluconate + H2O. Its pathway is carbohydrate metabolism; D-xylose degradation. Its function is as follows. Catalyzes the dehydration of D-xylonate to 2-dehydro-3-deoxy-D-arabinonate during D-xylose degradation. Can also dehydrate D-gluconate, with similar catalytic efficiency. Has weak activity with D-galactonate, D-fuconate and L-arabinonate. The chain is D-xylonate dehydratase from Caulobacter vibrioides (strain ATCC 19089 / CIP 103742 / CB 15) (Caulobacter crescentus).